A 344-amino-acid polypeptide reads, in one-letter code: Large ribosomal subunit protein uL3 (344 aa).

This sequence belongs to the universal ribosomal protein uL3 family. As to quaternary structure, part of the 50S ribosomal subunit. Forms a cluster with proteins L14 and L24e.

In terms of biological role, one of the primary rRNA binding proteins, it binds directly near the 3'-end of the 23S rRNA, where it nucleates assembly of the 50S subunit. In Aeropyrum pernix (strain ATCC 700893 / DSM 11879 / JCM 9820 / NBRC 100138 / K1), this protein is Large ribosomal subunit protein uL3.